Here is a 164-residue protein sequence, read N- to C-terminus: tRNA (cytidine(34)-2'-O)-methyltransferase (164 aa).

Positions 80, 102, 124, and 132 each coordinate S-adenosyl-L-methionine.

It belongs to the class IV-like SAM-binding methyltransferase superfamily. RNA methyltransferase TrmH family. TrmL subfamily. In terms of assembly, homodimer.

Its subcellular location is the cytoplasm. The enzyme catalyses cytidine(34) in tRNA + S-adenosyl-L-methionine = 2'-O-methylcytidine(34) in tRNA + S-adenosyl-L-homocysteine + H(+). It catalyses the reaction 5-carboxymethylaminomethyluridine(34) in tRNA(Leu) + S-adenosyl-L-methionine = 5-carboxymethylaminomethyl-2'-O-methyluridine(34) in tRNA(Leu) + S-adenosyl-L-homocysteine + H(+). In terms of biological role, methylates the ribose at the nucleotide 34 wobble position in the two leucyl isoacceptors tRNA(Leu)(CmAA) and tRNA(Leu)(cmnm5UmAA). Catalyzes the methyl transfer from S-adenosyl-L-methionine to the 2'-OH of the wobble nucleotide. The polypeptide is tRNA (cytidine(34)-2'-O)-methyltransferase (Polaromonas sp. (strain JS666 / ATCC BAA-500)).